A 141-amino-acid polypeptide reads, in one-letter code: Nucleoside diphosphate kinase (141 aa).

ATP contacts are provided by lysine 11, phenylalanine 59, arginine 87, threonine 93, arginine 104, and asparagine 114. Histidine 117 acts as the Pros-phosphohistidine intermediate in catalysis.

The protein belongs to the NDK family. Homotetramer. It depends on Mg(2+) as a cofactor.

The protein resides in the cytoplasm. It catalyses the reaction a 2'-deoxyribonucleoside 5'-diphosphate + ATP = a 2'-deoxyribonucleoside 5'-triphosphate + ADP. It carries out the reaction a ribonucleoside 5'-diphosphate + ATP = a ribonucleoside 5'-triphosphate + ADP. In terms of biological role, major role in the synthesis of nucleoside triphosphates other than ATP. The ATP gamma phosphate is transferred to the NDP beta phosphate via a ping-pong mechanism, using a phosphorylated active-site intermediate. The sequence is that of Nucleoside diphosphate kinase from Pseudomonas fluorescens (strain ATCC BAA-477 / NRRL B-23932 / Pf-5).